The following is a 568-amino-acid chain: Potassium-transporting ATPase potassium-binding subunit (568 aa).

10 helical membrane-spanning segments follow: residues 7–27 (AEIA…GLFL), 65–85 (SYAL…YAIL), 135–155 (AGLT…AAAV), 177–197 (VSLY…VALG), 254–274 (LTNL…VVAF), 286–306 (ALIT…YWTE), 383–403 (GLYG…LMVG), 422–442 (MLAV…AAVL), 489–509 (LGIA…AIAG), and 530–550 (LFIG…FFPA).

It belongs to the KdpA family. The system is composed of three essential subunits: KdpA, KdpB and KdpC.

Its subcellular location is the cell inner membrane. Part of the high-affinity ATP-driven potassium transport (or Kdp) system, which catalyzes the hydrolysis of ATP coupled with the electrogenic transport of potassium into the cytoplasm. This subunit binds the periplasmic potassium ions and delivers the ions to the membrane domain of KdpB through an intramembrane tunnel. The polypeptide is Potassium-transporting ATPase potassium-binding subunit (Beijerinckia indica subsp. indica (strain ATCC 9039 / DSM 1715 / NCIMB 8712)).